A 273-amino-acid chain; its full sequence is Formamidopyrimidine-DNA glycosylase (273 aa).

The Schiff-base intermediate with DNA role is filled by P2. Catalysis depends on E3, which acts as the Proton donor. Catalysis depends on K58, which acts as the Proton donor; for beta-elimination activity. Residues H91, R110, and R153 each contribute to the DNA site. The FPG-type zinc-finger motif lies at K238–K272. The active-site Proton donor; for delta-elimination activity is the R262.

The protein belongs to the FPG family. Monomer. Zn(2+) serves as cofactor.

It carries out the reaction Hydrolysis of DNA containing ring-opened 7-methylguanine residues, releasing 2,6-diamino-4-hydroxy-5-(N-methyl)formamidopyrimidine.. The catalysed reaction is 2'-deoxyribonucleotide-(2'-deoxyribose 5'-phosphate)-2'-deoxyribonucleotide-DNA = a 3'-end 2'-deoxyribonucleotide-(2,3-dehydro-2,3-deoxyribose 5'-phosphate)-DNA + a 5'-end 5'-phospho-2'-deoxyribonucleoside-DNA + H(+). Functionally, involved in base excision repair of DNA damaged by oxidation or by mutagenic agents. Acts as a DNA glycosylase that recognizes and removes damaged bases. Has a preference for oxidized purines, such as 7,8-dihydro-8-oxoguanine (8-oxoG). Has AP (apurinic/apyrimidinic) lyase activity and introduces nicks in the DNA strand. Cleaves the DNA backbone by beta-delta elimination to generate a single-strand break at the site of the removed base with both 3'- and 5'-phosphates. The protein is Formamidopyrimidine-DNA glycosylase of Lactobacillus delbrueckii subsp. bulgaricus (strain ATCC BAA-365 / Lb-18).